A 253-amino-acid chain; its full sequence is 5-oxoprolinase subunit A (253 aa).

Belongs to the LamB/PxpA family. In terms of assembly, forms a complex composed of PxpA, PxpB and PxpC.

It catalyses the reaction 5-oxo-L-proline + ATP + 2 H2O = L-glutamate + ADP + phosphate + H(+). Its function is as follows. Catalyzes the cleavage of 5-oxoproline to form L-glutamate coupled to the hydrolysis of ATP to ADP and inorganic phosphate. The protein is 5-oxoprolinase subunit A of Bacillus cereus (strain 03BB102).